The following is a 200-amino-acid chain: Anthranilate synthase component 2 (200 aa).

In terms of domain architecture, Glutamine amidotransferase type-1 spans 3 to 196; the sequence is NILLLDNIDS…IHWASLKYIT (194 aa). L-glutamine is bound at residue 57-59; the sequence is GPS. The active-site Nucleophile; for GATase activity is the cysteine 84. L-glutamine is bound by residues glutamine 88 and 134–135; that span reads SL. Residues histidine 170 and glutamate 172 each act as for GATase activity in the active site.

Heterotetramer consisting of two non-identical subunits: a beta subunit (TrpG) and a large alpha subunit (TrpE).

It catalyses the reaction chorismate + L-glutamine = anthranilate + pyruvate + L-glutamate + H(+). The protein operates within amino-acid biosynthesis; L-tryptophan biosynthesis; L-tryptophan from chorismate: step 1/5. Its function is as follows. Part of a heterotetrameric complex that catalyzes the two-step biosynthesis of anthranilate, an intermediate in the biosynthesis of L-tryptophan. In the first step, the glutamine-binding beta subunit (TrpG) of anthranilate synthase (AS) provides the glutamine amidotransferase activity which generates ammonia as a substrate that, along with chorismate, is used in the second step, catalyzed by the large alpha subunit of AS (TrpE) to produce anthranilate. In the absence of TrpG, TrpE can synthesize anthranilate directly from chorismate and high concentrations of ammonia. This Buchnera aphidicola subsp. Acyrthosiphon pisum (strain APS) (Acyrthosiphon pisum symbiotic bacterium) protein is Anthranilate synthase component 2 (trpG).